A 203-amino-acid polypeptide reads, in one-letter code: VPS4-associated protein 1 (203 aa).

The span at 99–109 shows a compositional bias: basic and acidic residues; sequence EKETNNSKDPD. Disordered regions lie at residues 99–125 and 171–193; these read EKET…AKND and QVNR…EELL. The segment covering 110 to 120 has biased composition (low complexity); sequence PTTTDSTDTSP. A coiled-coil region spans residues 121-157; that stretch reads QAKNDAEILSETKKQYSKILDKVTELQRKNRKYELAK. Residues 171–182 are compositionally biased toward basic and acidic residues; sequence QVNRERYLKEQE.

As to quaternary structure, interacts with VPS4.

It is found in the cytoplasm. It localises to the endosome. VPS4-associated protein involved in trafficking to the vacuole. The chain is VPS4-associated protein 1 (VFA1) from Saccharomyces cerevisiae (strain ATCC 204508 / S288c) (Baker's yeast).